The primary structure comprises 562 residues: Urease subunit alpha (562 aa).

Residues Gly-131–Phe-562 form the Urease domain. The Ni(2+) site is built by His-136, His-138, and Lys-219. Lys-219 is modified (N6-carboxylysine). Position 221 (His-221) interacts with substrate. Ni(2+) contacts are provided by His-248 and His-274. His-322 (proton donor) is an active-site residue. Asp-362 provides a ligand contact to Ni(2+).

Belongs to the metallo-dependent hydrolases superfamily. Urease alpha subunit family. Heterotrimer of UreA (gamma), UreB (beta) and UreC (alpha) subunits. Three heterotrimers associate to form the active enzyme. It depends on Ni cation as a cofactor. In terms of processing, carboxylation allows a single lysine to coordinate two nickel ions.

It is found in the cytoplasm. The catalysed reaction is urea + 2 H2O + H(+) = hydrogencarbonate + 2 NH4(+). Its pathway is nitrogen metabolism; urea degradation; CO(2) and NH(3) from urea (urease route): step 1/1. In Paracoccus denitrificans (strain Pd 1222), this protein is Urease subunit alpha.